Consider the following 882-residue polypeptide: DNA mismatch repair protein MutS (882 aa).

An ATP-binding site is contributed by 640 to 647 (GPNMGGKS).

This sequence belongs to the DNA mismatch repair MutS family.

In terms of biological role, this protein is involved in the repair of mismatches in DNA. It is possible that it carries out the mismatch recognition step. This protein has a weak ATPase activity. The polypeptide is DNA mismatch repair protein MutS (Albidiferax ferrireducens (strain ATCC BAA-621 / DSM 15236 / T118) (Rhodoferax ferrireducens)).